The primary structure comprises 198 residues: MKVTKADIVISAVKPEQYPDGDLPEIALAGRSNVGKSSFINKILNRKKLVRISSKPGKTQTLNFFLINEMMHFVDVPGYGYAKVSKTERAAWGKMIETYFTTREQLDAAVLVVDLRHKPTNDDVMMYDFLKHYDIPTIIIATKADKIPKGKWQKHLKVVKETLDIESGDEVVLFSSETGLGKEEAWKAIHKFTKTKNA.

An EngB-type G domain is found at 22–195; sequence DLPEIALAGR…WKAIHKFTKT (174 aa). GTP is bound by residues 30 to 37, 57 to 61, 75 to 78, 142 to 145, and 174 to 176; these read GRSNVGKS, GKTQT, DVPG, TKAD, and FSS. 2 residues coordinate Mg(2+): S37 and T59.

The protein belongs to the TRAFAC class TrmE-Era-EngA-EngB-Septin-like GTPase superfamily. EngB GTPase family. Mg(2+) is required as a cofactor.

Its function is as follows. Necessary for normal cell division and for the maintenance of normal septation. This Bacillus anthracis (strain A0248) protein is Probable GTP-binding protein EngB.